A 389-amino-acid chain; its full sequence is Chalcone synthase 6 (389 aa).

The active site involves cysteine 164.

It belongs to the thiolase-like superfamily. Chalcone/stilbene synthases family.

It catalyses the reaction (E)-4-coumaroyl-CoA + 3 malonyl-CoA + 3 H(+) = 2',4,4',6'-tetrahydroxychalcone + 3 CO2 + 4 CoA. Its pathway is secondary metabolite biosynthesis; flavonoid biosynthesis. In terms of biological role, the primary product of this enzyme is 4,2',4',6'-tetrahydroxychalcone (also termed naringenin-chalcone or chalcone) which can under specific conditions spontaneously isomerize into naringenin. This is Chalcone synthase 6 (CHS6) from Trifolium subterraneum (Subterranean clover).